The sequence spans 126 residues: Glycine cleavage system H protein (126 aa).

The Lipoyl-binding domain maps to 21–103 (TVTVGISNHA…YEGGWIARIK (83 aa)). At Lys62 the chain carries N6-lipoyllysine.

This sequence belongs to the GcvH family. The glycine cleavage system is composed of four proteins: P, T, L and H. (R)-lipoate serves as cofactor.

Functionally, the glycine cleavage system catalyzes the degradation of glycine. The H protein shuttles the methylamine group of glycine from the P protein to the T protein. This is Glycine cleavage system H protein from Aliivibrio salmonicida (strain LFI1238) (Vibrio salmonicida (strain LFI1238)).